Here is a 288-residue protein sequence, read N- to C-terminus: NAD(P)H-hydrate epimerase (288 aa).

The transit peptide at M1–Y59 directs the protein to the mitochondrion. In terms of domain architecture, YjeF N-terminal spans A65 to L275. N119–D123 contacts (6S)-NADPHX. N120 contributes to the K(+) binding site. K144 carries the N6-succinyllysine modification. D185 contributes to the K(+) binding site. (6S)-NADPHX-binding positions include G189–E195 and D218. A K(+)-binding site is contributed by S221.

Belongs to the NnrE/AIBP family. As to quaternary structure, homodimer. Interacts with APOA1 and APOA2. Requires K(+) as cofactor. Post-translationally, undergoes physiological phosphorylation during sperm capacitation, downstream to PKA activation.

It is found in the mitochondrion. It localises to the secreted. The catalysed reaction is (6R)-NADHX = (6S)-NADHX. It catalyses the reaction (6R)-NADPHX = (6S)-NADPHX. Catalyzes the epimerization of the S- and R-forms of NAD(P)HX, a damaged form of NAD(P)H that is a result of enzymatic or heat-dependent hydration. This is a prerequisite for the S-specific NAD(P)H-hydrate dehydratase to allow the repair of both epimers of NAD(P)HX. Accelerates cholesterol efflux from endothelial cells to high-density lipoprotein (HDL) and thereby regulates angiogenesis. The protein is NAD(P)H-hydrate epimerase of Sus scrofa (Pig).